Consider the following 443-residue polypeptide: Chromosome partition protein MukF (443 aa).

The leucine-zipper stretch occupies residues 209–237 (LDETSINLRELQDTLNAAGDKLQSQLLRI).

Belongs to the MukF family. As to quaternary structure, interacts, and probably forms a ternary complex, with MukE and MukB via its C-terminal region. The complex formation is stimulated by calcium or magnesium. It is required for an interaction between MukE and MukB.

Its subcellular location is the cytoplasm. The protein localises to the nucleoid. Functionally, involved in chromosome condensation, segregation and cell cycle progression. May participate in facilitating chromosome segregation by condensation DNA from both sides of a centrally located replisome during cell division. Not required for mini-F plasmid partitioning. Probably acts via its interaction with MukB and MukE. Overexpression results in anucleate cells. It has a calcium binding activity. This is Chromosome partition protein MukF from Haemophilus ducreyi (strain 35000HP / ATCC 700724).